Reading from the N-terminus, the 141-residue chain is Arsenate reductase (141 aa).

Cysteine 12 serves as the catalytic Nucleophile; cysteine thioarsenate intermediate.

Belongs to the ArsC family.

It carries out the reaction [glutaredoxin]-dithiol + arsenate + glutathione + H(+) = glutathionyl-S-S-[glutaredoxin] + arsenite + H2O. Involved in resistance to arsenate. Catalyzes the reduction of arsenate [As(V)] to arsenite [As(III)]. The protein is Arsenate reductase of Escherichia coli (strain K12).